The following is a 798-amino-acid chain: ATP-dependent RNA helicase bel (798 aa).

A disordered region spans residues 16 to 248; it reads VAGLDLNGGS…SRWKEGGGSN (233 aa). The span at 31-42 shows a compositional bias: polar residues; that stretch reads PITSKTSTNSVT. 3 stretches are compositionally biased toward gly residues: residues 94–110, 118–132, and 154–178; these read RGGGGEYRRGGGGGGRG, YGYGSGGGGRRGGGG, and SGGGGGGGRGFGRGPSYRGGGGGSG. Serine 177 and serine 179 each carry phosphoserine. Over residues 198 to 209 the composition is skewed to basic and acidic residues; it reads RNDRWQEPERPA. A phosphoserine mark is found at serine 214 and serine 219. Residues 295 to 323 carry the Q motif motif; the sequence is TSFDDVQLTEIIRNNVALARYDKPTPVQK. Residues 315–322 and 339–346 each bind ATP; these read YDKPTPVQ and AQTGSGKT. In terms of domain architecture, Helicase ATP-binding spans 326–515; it reads IPIIINGRDL…SDFLSNYIFL (190 aa). Positions 459 to 462 match the DEAD box motif; the sequence is DEAD. In terms of domain architecture, Helicase C-terminal spans 542-693; it reads YLLDLLSSIR…EIPSFMEDMS (152 aa). A Phosphoserine modification is found at serine 638. Disordered stretches follow at residues 689 to 765 and 778 to 798; these read MEDM…SGGG and GGSYGGGSASHSSNAPDWWAQ. Gly residues-rich tracts occupy residues 706–717 and 740–750; these read RGGGGRYGGGFG and GGSGSGGGGGS.

This sequence belongs to the DEAD box helicase family. DDX3/DED1 subfamily. In terms of tissue distribution, vas and bel colocalize in nuage (perinuclear, electron-dense granules in germline cells) and at the oocyte posterior during oogenesis.

It localises to the cytoplasm. It carries out the reaction ATP + H2O = ADP + phosphate + H(+). In terms of biological role, ATP-dependent RNA helicase that is essential and required for cellular function, larval growth, and for male and female fertility. Also required for RNA interference (RNAi), double-stranded RNA induces potent and specific gene silencing, by acting downstream of dsRNA internalization. RNAi is mediated by the RNA-induced silencing complex (RISC), a sequence-specific, multicomponent nuclease that destroys or silences messenger RNAs homologous to the silencing trigger. This chain is ATP-dependent RNA helicase bel, found in Drosophila melanogaster (Fruit fly).